The following is a 690-amino-acid chain: Probable xyloglucan glycosyltransferase 1 (690 aa).

Helical transmembrane passes span 120–140 and 166–186; these read AFLLLSVLLLAVDVAAHAQGW and LEYLAPGLQFLANACVVLFLI. D272 is an active-site residue. Residues D331 and D333 each contribute to the substrate site. D425 is an active-site residue. The next 2 helical transmembrane spans lie at 503 to 523 and 528 to 548; these read LILPFYSFTLFCIILPMTMFV and LPAWVVCYIPATMSLLNILPA. The segment at 607–637 is disordered; sequence QPKQQRVGSAPNLDSLAKESHPKKDSKKKKH. 2 helical membrane passes run 640–659 and 665–685; these read IYQKELALSFLLLTAAARSL and IHFYFLLFQGVSFLVVGLDLI.

Belongs to the glycosyltransferase 2 family. Plant cellulose synthase-like C subfamily.

The protein resides in the golgi apparatus membrane. In terms of biological role, probable beta-1,4-glucan synthase rather involved in the synthesis of the xyloglucan backbone than cellulose. Seems to work simultaneously with xyloglucan 6-xylosyltransferase. Xyloglucan is a noncellulosic polysaccharides of plant cell wall and consists of a glucan backbone substituted by xylose, galactose and fucose. This chain is Probable xyloglucan glycosyltransferase 1 (CSLC1), found in Oryza sativa subsp. japonica (Rice).